The primary structure comprises 1024 residues: SAC3 family protein 1 (1024 aa).

The interval 1-62 is disordered; that stretch reads MEKRNETGNN…QDSRQKRFSS (62 aa). A compositionally biased stretch (basic residues) spans 11–21; sequence RLKRSNNRGKS. Residues 22 to 38 are compositionally biased toward basic and acidic residues; it reads KKDWKDASVETTPRETS. Residues 39–52 are compositionally biased toward acidic residues; that stretch reads VDEDNTSVFEDVEA. One can recognise a PCI domain in the interval 243 to 433; sequence EVEQLRKGIL…NKTAFFNDSK (191 aa). S841 carries the phosphoserine modification. Residues 945 to 1022 are a coiled coil; that stretch reads AQLEELEVVR…ARDLLKKVET (78 aa).

Belongs to the SAC3 family.

Its subcellular location is the cytoplasm. The protein resides in the nucleus envelope. In Schizosaccharomyces pombe (strain 972 / ATCC 24843) (Fission yeast), this protein is SAC3 family protein 1.